The primary structure comprises 231 residues: Tol-Pal system protein TolQ (231 aa).

3 helical membrane passes run 20–40, 134–154, and 176–196; these read IVVQ…WIMI, FLAT…VWGI, and IAEA…AVIA.

It belongs to the ExbB/TolQ family. In terms of assembly, the Tol-Pal system is composed of five core proteins: the inner membrane proteins TolA, TolQ and TolR, the periplasmic protein TolB and the outer membrane protein Pal. They form a network linking the inner and outer membranes and the peptidoglycan layer.

The protein resides in the cell inner membrane. Its function is as follows. Part of the Tol-Pal system, which plays a role in outer membrane invagination during cell division and is important for maintaining outer membrane integrity. This Pseudomonas aeruginosa (strain ATCC 15692 / DSM 22644 / CIP 104116 / JCM 14847 / LMG 12228 / 1C / PRS 101 / PAO1) protein is Tol-Pal system protein TolQ.